A 102-amino-acid polypeptide reads, in one-letter code: RNA-binding protein Hfq (102 aa).

The Sm domain maps to 9 to 68; that stretch reads DPFLNALRRERVPVSIYLVNGIKLQGQIESFDQFVILLKNTVSQMVYKHAISTVVPSRPV. The segment at 63-102 is disordered; it reads VPSRPVSHHSNNAGGGTSSNYHHGSSPQNTSAQQDSEETE. Over residues 70 to 96 the composition is skewed to polar residues; sequence HHSNNAGGGTSSNYHHGSSPQNTSAQQ.

Belongs to the Hfq family. Homohexamer.

In terms of biological role, RNA chaperone that binds small regulatory RNA (sRNAs) and mRNAs to facilitate mRNA translational regulation in response to envelope stress, environmental stress and changes in metabolite concentrations. Also binds with high specificity to tRNAs. This is RNA-binding protein Hfq from Shigella dysenteriae serotype 1 (strain Sd197).